The following is an 864-amino-acid chain: Calphotin (864 aa).

The segment at 816-858 (LQTTDVSLLAIAATLDAIGEKLKDQKARNQQVMDRLCEIEKIL) is leucine-zipper.

As to quaternary structure, homodimer. As to expression, soma and axons of photoreceptor cells of compound eyes and ocelli.

It localises to the cytoplasm. In terms of biological role, plays important roles in both rhabdomere development and in photoreceptor cell survival. Might function as a calcium-sequestering 'sponge' to regulate the amount of free cytoplasmic calcium. It binds 0.3 mole of Ca(2+) per mole of protein. This chain is Calphotin (Cpn), found in Drosophila melanogaster (Fruit fly).